A 142-amino-acid polypeptide reads, in one-letter code: Translation initiation factor 2 subunit beta (142 aa).

The protein belongs to the eIF-2-beta/eIF-5 family. In terms of assembly, heterotrimer composed of an alpha, a beta and a gamma chain.

EIF-2 functions in the early steps of protein synthesis by forming a ternary complex with GTP and initiator tRNA. The protein is Translation initiation factor 2 subunit beta of Thermococcus kodakarensis (strain ATCC BAA-918 / JCM 12380 / KOD1) (Pyrococcus kodakaraensis (strain KOD1)).